A 443-amino-acid polypeptide reads, in one-letter code: ATP-dependent protease ATPase subunit HslU (443 aa).

ATP contacts are provided by residues I20, 62-67 (GVGKTE), D255, E321, and R393.

Belongs to the ClpX chaperone family. HslU subfamily. A double ring-shaped homohexamer of HslV is capped on each side by a ring-shaped HslU homohexamer. The assembly of the HslU/HslV complex is dependent on binding of ATP.

The protein localises to the cytoplasm. Its function is as follows. ATPase subunit of a proteasome-like degradation complex; this subunit has chaperone activity. The binding of ATP and its subsequent hydrolysis by HslU are essential for unfolding of protein substrates subsequently hydrolyzed by HslV. HslU recognizes the N-terminal part of its protein substrates and unfolds these before they are guided to HslV for hydrolysis. This Helicobacter acinonychis (strain Sheeba) protein is ATP-dependent protease ATPase subunit HslU.